We begin with the raw amino-acid sequence, 97 residues long: Citrate lyase acyl carrier protein 2 (97 aa).

S14 is modified (O-(phosphoribosyl dephospho-coenzyme A)serine).

Belongs to the CitD family. In terms of assembly, oligomer with a subunit composition of (alpha,beta,gamma)6.

It localises to the cytoplasm. In terms of biological role, covalent carrier of the coenzyme of citrate lyase. This is Citrate lyase acyl carrier protein 2 from Salmonella paratyphi A (strain ATCC 9150 / SARB42).